The chain runs to 218 residues: Pyridoxine/pyridoxamine 5'-phosphate oxidase (218 aa).

Residues 14 to 17 (RREY) and K72 contribute to the substrate site. FMN contacts are provided by residues 67-72 (RIVLLK), 82-83 (YT), R88, K89, and Q111. Y129, R133, and S137 together coordinate substrate. Residues 146-147 (QS) and W191 contribute to the FMN site. Residue 197-199 (RLH) participates in substrate binding. R201 provides a ligand contact to FMN.

It belongs to the pyridoxamine 5'-phosphate oxidase family. In terms of assembly, homodimer. The cofactor is FMN.

The catalysed reaction is pyridoxamine 5'-phosphate + O2 + H2O = pyridoxal 5'-phosphate + H2O2 + NH4(+). It catalyses the reaction pyridoxine 5'-phosphate + O2 = pyridoxal 5'-phosphate + H2O2. The protein operates within cofactor metabolism; pyridoxal 5'-phosphate salvage; pyridoxal 5'-phosphate from pyridoxamine 5'-phosphate: step 1/1. It functions in the pathway cofactor metabolism; pyridoxal 5'-phosphate salvage; pyridoxal 5'-phosphate from pyridoxine 5'-phosphate: step 1/1. In terms of biological role, catalyzes the oxidation of either pyridoxine 5'-phosphate (PNP) or pyridoxamine 5'-phosphate (PMP) into pyridoxal 5'-phosphate (PLP). The chain is Pyridoxine/pyridoxamine 5'-phosphate oxidase from Salmonella paratyphi B (strain ATCC BAA-1250 / SPB7).